The sequence spans 1113 residues: MTSSGKIRIYELSRDLNLENKDVLNAAKKLSIPAKSHSSSISNAEANEIKAFLNKQSNQSINNKTKQNSSKEILSLKKAGSKPIKDEITKKKANLPPKASAESQSSKPRIETSKAPVAPIKPIKEPVQKANTSNQSKGVINNLIQPQKPSPLQPKQPKSIHLENNASKQNIEDNNNFQERSPRTQLVQKPPLPTKNNEPPQQKTSIPKRPITPPARPSKPILDNRSSVKSRPIIEAPRKKTGPDRNSPVQPRTQNNQNRQRIPNKPGKPPLRGNPPVELVGAPIRRSNKPNNNVKGPRDGGYRPGPPNRNDPSNQQGHVKRDIKAPIRQRPGMPPGMRKPVAPGELMQLQKPTGRSQPPAPRRVGAPAPPSQRADSTKDRQGKSPGAKQPVNRPTPATAPKKPSHRPPGSGPTKRRSDWDDAAKLEALRNKAPQKQRQKVHIIGENDDALTTETSGFAAEQEAMVLSASLARPAKPKSTKKSNSKATVVTRKRKKESTRQRQRRRAMELRAAREAKQVRPEMIIIPEGNLTVQELADKLSVESSEIIKSLFFKGITATVTQSLDLSTIETVAEEFGVPVLQDDIEEAATKTAEMLDEADKDHLIRRPPVVTVMGHVDHGKTSLLDAIRKARVASGEAGGITQHIGAYQVELEHEKKKRKLTFLDTPGHEAFTAMRARGTKVTDVAVLVVAADDGVRPQTLEAISHARAAKVPIVVAINKIDKEGASPDRVKQELSEQELVAEEWGGEVVMVPVSAIKGENIDKLLEMVLLVTEVEDLQANPDRLAKGTVIEAHLDKAKGPVATLLIQNGTLKSGDVLAAGPVLGKVRAMVDENGIRLKEAGPSCPVEALGFNEVPTAGDEFEVYPDEKSARAVVGDRASDARATRLAQQMASRRVSLSSMSGQANEGDLKELNIILKADVQGSIEAILGSLEQLPKDEVQVRVLLSAPGEVTETDVDLAAASGAVIVGFNTSMASGAKKAADANSVDVRDYEVIYKLLEDIQLAMEGLLEPDMVEESLGEAEVRAIFSIGKSAVAGCYITNGKLQRNCKVRVKRGSQIVFEGDLDSLRRNKDVVKDVGSGFECGVGCDRFANWKEGDIIQGYKLVTKRRTLGP.

Composition is skewed to polar residues over residues 56–72, 129–139, 162–187, and 194–205; these read QSNQ…SSKE, KANTSNQSKGV, LENN…TQLV, and TKNNEPPQQKTS. Disordered regions lie at residues 56 to 446 and 470 to 504; these read QSNQ…IGEN and LARP…RQRR. The segment covering 248 to 265 has biased composition (low complexity); sequence PVQPRTQNNQNRQRIPNK. Over residues 415–429 the composition is skewed to basic and acidic residues; it reads RRSDWDDAAKLEALR. Basic residues-rich tracts occupy residues 474–483 and 490–504; these read AKPKSTKKSN and TRKR…RQRR. One can recognise a tr-type G domain in the interval 605–777; it reads RRPPVVTVMG…VLLVTEVEDL (173 aa). The segment at 614–621 is G1; it reads GHVDHGKT. 614 to 621 lines the GTP pocket; that stretch reads GHVDHGKT. A G2 region spans residues 639–643; sequence GITQH. Positions 664 to 667 are G3; it reads DTPG. Residues 664 to 668 and 718 to 721 each bind GTP; these read DTPGH and NKID. The segment at 718 to 721 is G4; it reads NKID. A G5 region spans residues 754 to 756; that stretch reads SAI.

This sequence belongs to the TRAFAC class translation factor GTPase superfamily. Classic translation factor GTPase family. IF-2 subfamily.

It localises to the cytoplasm. Functionally, one of the essential components for the initiation of protein synthesis. Protects formylmethionyl-tRNA from spontaneous hydrolysis and promotes its binding to the 30S ribosomal subunits. Also involved in the hydrolysis of GTP during the formation of the 70S ribosomal complex. The polypeptide is Translation initiation factor IF-2 (Prochlorococcus marinus (strain MIT 9211)).